The chain runs to 101 residues: Ribonuclease kappa-B (101 aa).

Helical transmembrane passes span 13–33 (ACGIVLSVWGVIMLVLLGVFF) and 68–88 (VSYNCFIAAAIYIVLGGFSFC).

This sequence belongs to the RNase K family.

The protein resides in the membrane. Functionally, endoribonuclease which preferentially cleaves ApU and ApG phosphodiester bonds. This is Ribonuclease kappa-B (rnasek-b) from Xenopus laevis (African clawed frog).